The sequence spans 600 residues: Aspartate--tRNA(Asp/Asn) ligase (600 aa).

Residue Glu-187 coordinates L-aspartate. Positions 211 to 214 are aspartate; that stretch reads QIFK. 2 residues coordinate L-aspartate: Arg-233 and His-463. 233–235 lines the ATP pocket; sequence RDE. An ATP-binding site is contributed by Glu-497. L-aspartate is bound at residue Arg-504. Residue 549–552 coordinates ATP; it reads GVDR.

It belongs to the class-II aminoacyl-tRNA synthetase family. Type 1 subfamily. Homodimer.

Its subcellular location is the cytoplasm. It catalyses the reaction tRNA(Asx) + L-aspartate + ATP = L-aspartyl-tRNA(Asx) + AMP + diphosphate. In terms of biological role, aspartyl-tRNA synthetase with relaxed tRNA specificity since it is able to aspartylate not only its cognate tRNA(Asp) but also tRNA(Asn). Reaction proceeds in two steps: L-aspartate is first activated by ATP to form Asp-AMP and then transferred to the acceptor end of tRNA(Asp/Asn). In Wolbachia pipientis wMel, this protein is Aspartate--tRNA(Asp/Asn) ligase.